The chain runs to 412 residues: Serine hydroxymethyltransferase (412 aa).

(6S)-5,6,7,8-tetrahydrofolate is bound by residues L117 and G121–L123. Residue K226 is modified to N6-(pyridoxal phosphate)lysine.

This sequence belongs to the SHMT family. Homodimer. The cofactor is pyridoxal 5'-phosphate.

It is found in the cytoplasm. It carries out the reaction (6R)-5,10-methylene-5,6,7,8-tetrahydrofolate + glycine + H2O = (6S)-5,6,7,8-tetrahydrofolate + L-serine. It functions in the pathway one-carbon metabolism; tetrahydrofolate interconversion. Its pathway is amino-acid biosynthesis; glycine biosynthesis; glycine from L-serine: step 1/1. Its function is as follows. Catalyzes the reversible interconversion of serine and glycine with tetrahydrofolate (THF) serving as the one-carbon carrier. This reaction serves as the major source of one-carbon groups required for the biosynthesis of purines, thymidylate, methionine, and other important biomolecules. Also exhibits THF-independent aldolase activity toward beta-hydroxyamino acids, producing glycine and aldehydes, via a retro-aldol mechanism. This Staphylococcus aureus (strain bovine RF122 / ET3-1) protein is Serine hydroxymethyltransferase.